Reading from the N-terminus, the 400-residue chain is Endophilin-B2 (400 aa).

Met1 is modified (N-acetylmethionine). The interval 1–27 (MDFNMKKLASDAGIFFTRAVQFTEEKF) is membrane-binding amphipathic helix. The residue at position 10 (Ser10) is a Phosphoserine. Residues 24-287 (EEKFGQAEKT…LGSSQGAIFP (264 aa)) enclose the BAR domain. A coiled-coil region spans residues 205–234 (SASALWNDEVDKAEQELRVAQTEFDRQAEV). Residues 340 to 400 (SGTRKARVLY…VPVTYLELLS (61 aa)) enclose the SH3 domain. Phosphoserine is present on Ser400.

It belongs to the endophilin family. In terms of assembly, homodimer, and heterodimer with SH3GLB1.

It is found in the cytoplasm. The protein is Endophilin-B2 (Sh3glb2) of Mus musculus (Mouse).